A 441-amino-acid polypeptide reads, in one-letter code: Glutamyl-tRNA reductase (441 aa).

Substrate is bound by residues 58-61 (TCNR), Ser116, 121-123 (EPD), and Gln127. The Nucleophile role is filled by Cys59. 195–200 (GAGMAG) provides a ligand contact to NADP(+).

Belongs to the glutamyl-tRNA reductase family. As to quaternary structure, homodimer.

It carries out the reaction (S)-4-amino-5-oxopentanoate + tRNA(Glu) + NADP(+) = L-glutamyl-tRNA(Glu) + NADPH + H(+). It functions in the pathway porphyrin-containing compound metabolism; protoporphyrin-IX biosynthesis; 5-aminolevulinate from L-glutamyl-tRNA(Glu): step 1/2. Catalyzes the NADPH-dependent reduction of glutamyl-tRNA(Glu) to glutamate 1-semialdehyde (GSA). This chain is Glutamyl-tRNA reductase, found in Ignicoccus hospitalis (strain KIN4/I / DSM 18386 / JCM 14125).